A 130-amino-acid polypeptide reads, in one-letter code: Small ribosomal subunit protein uS11 (130 aa).

It belongs to the universal ribosomal protein uS11 family. As to quaternary structure, part of the 30S ribosomal subunit. Interacts with proteins S7 and S18. Binds to IF-3.

Its function is as follows. Located on the platform of the 30S subunit, it bridges several disparate RNA helices of the 16S rRNA. Forms part of the Shine-Dalgarno cleft in the 70S ribosome. This Shewanella violacea (strain JCM 10179 / CIP 106290 / LMG 19151 / DSS12) protein is Small ribosomal subunit protein uS11.